The primary structure comprises 70 residues: Sec-independent protein translocase protein TatA (70 aa).

The chain crosses the membrane as a helical span at residues 1-21; the sequence is MGIGVWELLLLFLIVLVVFGT. The interval 42-70 is disordered; that stretch reads MSENEDKPSEGGARTLEGEVVDKKEKDKV. Residues 57–70 are compositionally biased toward basic and acidic residues; the sequence is LEGEVVDKKEKDKV.

Belongs to the TatA/E family. The Tat system comprises two distinct complexes: a TatABC complex, containing multiple copies of TatA, TatB and TatC subunits, and a separate TatA complex, containing only TatA subunits. Substrates initially bind to the TatABC complex, which probably triggers association of the separate TatA complex to form the active translocon.

It is found in the cell inner membrane. Part of the twin-arginine translocation (Tat) system that transports large folded proteins containing a characteristic twin-arginine motif in their signal peptide across membranes. TatA could form the protein-conducting channel of the Tat system. This chain is Sec-independent protein translocase protein TatA, found in Methylococcus capsulatus (strain ATCC 33009 / NCIMB 11132 / Bath).